The primary structure comprises 967 residues: Mediator of RNA polymerase II transcription subunit 14 (967 aa).

This sequence belongs to the Mediator complex subunit 14 family. Component of the Mediator complex.

It localises to the nucleus. Its function is as follows. Component of the Mediator complex, a coactivator involved in the regulated transcription of nearly all RNA polymerase II-dependent genes. Mediator functions as a bridge to convey information from gene-specific regulatory proteins to the basal RNA polymerase II transcription machinery. Mediator is recruited to promoters by direct interactions with regulatory proteins and serves as a scaffold for the assembly of a functional preinitiation complex with RNA polymerase II and the general transcription factors. In Eremothecium gossypii (strain ATCC 10895 / CBS 109.51 / FGSC 9923 / NRRL Y-1056) (Yeast), this protein is Mediator of RNA polymerase II transcription subunit 14 (RGR1).